Here is a 160-residue protein sequence, read N- to C-terminus: uncharacterized protein (160 aa).

Positions 1 to 29 (MTGKTHIMGGIASCTAAAYYYGFDPVLMA) are cleaved as a signal peptide. 2 consecutive transmembrane segments (helical) span residues 67 to 87 (TFTHSLLFMLIMFFITSTYIP) and 137 to 157 (QLVLAGLTLASCYYFYMLFHG).

To E.coli YdjM.

The protein localises to the cell membrane. This is an uncharacterized protein from Bacillus subtilis (strain 168).